A 154-amino-acid polypeptide reads, in one-letter code: MAARLCCQLDPARDVLCLRPVGAESCGRPVSGSLGGLSSPSPSAVPADHGAHLSLRGLPVCAFSSAGPCALRFTSARRMETTVNAHQILPKVLHKRTLGLSAMSTTDLEAYFKDCLFKDWEELGEEIRLKVFVLGGCRHKLVCVPAPCNFFTSA.

The interval 68–117 is mitochondrial targeting sequence; that stretch reads PCALRFTSARRMETTVNAHQILPKVLHKRTLGLSAMSTTDLEAYFKDCLF.

Belongs to the orthohepadnavirus protein X family. As to quaternary structure, may form homodimer. May interact with host CEBPA, CFLAR, CREB1, DDB1, E4F1, HBXIP, HSPD1/HSP60, NFKBIA, POLR2E and SMAD4. Interacts with host SMC5-SMC6 complex and induces its degradation. Interacts with host TRPC4AP; leading to prevent ubiquitination of TRPC4AP. Interacts with host PLSCR1; this interaction promotes ubiquitination and degradation of HBx and impairs HBx-mediated cell proliferation. In terms of processing, a fraction may be phosphorylated in insect cells and HepG2 cells, a human hepatoblastoma cell line. Phosphorylated in vitro by host protein kinase C or mitogen-activated protein kinase. N-acetylated in insect cells.

The protein localises to the host cytoplasm. It is found in the host nucleus. The protein resides in the host mitochondrion. Functionally, multifunctional protein that plays a role in silencing host antiviral defenses and promoting viral transcription. Does not seem to be essential for HBV infection. May be directly involved in development of cirrhosis and liver cancer (hepatocellular carcinoma). Most of cytosolic activities involve modulation of cytosolic calcium. The effect on apoptosis is controversial depending on the cell types in which the studies have been conducted. May induce apoptosis by localizing in mitochondria and causing loss of mitochondrial membrane potential. May also modulate apoptosis by binding host CFLAR, a key regulator of the death-inducing signaling complex (DISC). Promotes viral transcription by using the host E3 ubiquitin ligase DDB1 to target the SMC5-SMC6 complex to proteasomal degradation. This host complex would otherwise bind to viral episomal DNA, and prevents its transcription. Moderately stimulates transcription of many different viral and cellular transcription elements. Promoters and enhancers stimulated by HBx contain DNA binding sites for NF-kappa-B, AP-1, AP-2, c-EBP, ATF/CREB, or the calcium-activated factor NF-AT. The polypeptide is Protein X (Hepatitis B virus genotype E (isolate Cote d'Ivoire/ABI-212/2003) (HBV-E)).